The following is a 698-amino-acid chain: Protein artemis (698 aa).

The residue at position 380 (Thr380) is a Phosphothreonine. Ser385 carries the phosphoserine modification. Disordered regions lie at residues 445 to 485 (ANFV…DPDV), 505 to 595 (LENL…DSIS), and 620 to 669 (NGVP…LPKP). The segment covering 449–461 (DCDESNSDSEGEL) has biased composition (acidic residues). The span at 508–521 (LPSSIETGGSQSPK) shows a compositional bias: polar residues. Low complexity predominate over residues 538 to 551 (THISSQNSSQSTHI). Residues 552–583 (TDQGSQGWDSQCDTVLLSSQEKSGGDSTSLNK) are compositionally biased toward polar residues. The span at 641-655 (TSLTSTQADSQSSSD) shows a compositional bias: low complexity. A Phosphoserine; by ATM modification is found at Ser650.

Belongs to the DNA repair metallo-beta-lactamase (DRMBL) family. In terms of assembly, interacts with LIG4; the interaction is direct. Interacts with ATM. Interacts with BRCA1. Interacts with PRKDC. Interacts with TP53BP1. Also exhibits ATM- and phosphorylation-dependent interaction with the MRN complex, composed of MRE11, RAD50, and NBN. Phosphorylation on undefined residues by PRKDC may stimulate endonucleolytic activity on 5' and 3' hairpins and overhangs. PRKDC must remain present, even after phosphorylation, for efficient hairpin opening. Also phosphorylated by ATM in response to ionizing radiation (IR) and by ATR in response to ultraviolet (UV) radiation.

The protein localises to the nucleus. In terms of biological role, required for V(D)J recombination, the process by which exons encoding the antigen-binding domains of immunoglobulins and T-cell receptor proteins are assembled from individual V, (D), and J gene segments. V(D)J recombination is initiated by the lymphoid specific RAG endonuclease complex, which generates site specific DNA double strand breaks (DSBs). These DSBs present two types of DNA end structures: hairpin sealed coding ends and phosphorylated blunt signal ends. These ends are independently repaired by the non homologous end joining (NHEJ) pathway to form coding and signal joints respectively. This protein exhibits single-strand specific 5'-3' exonuclease activity in isolation, and acquires endonucleolytic activity on 5' and 3' hairpins and overhangs when in a complex with PRKDC. The latter activity is required specifically for the resolution of closed hairpins prior to the formation of the coding joint. May also be required for the repair of complex DSBs induced by ionizing radiation, which require substantial end-processing prior to religation by NHEJ. This is Protein artemis (Dclre1c) from Rattus norvegicus (Rat).